The primary structure comprises 362 residues: Atypical chemokine receptor 3 (362 aa).

At 1-40 (MDLHLFDYSEPGNFSDISWPCNSSDCIVVDTVMCPNMPNK) the chain is on the extracellular side. Residues Asn13, Asn22, and Asn39 are each glycosylated (N-linked (GlcNAc...) asparagine). Residues 41 to 61 (SVLLYTLSFIYIFIFVIGMIA) form a helical membrane-spanning segment. Over 62 to 81 (NSVVVWVNIQAKTTGYDTHC) the chain is Cytoplasmic. The helical transmembrane segment at 82–102 (YILNLAIADLWVVLTIPVWVV) threads the bilayer. Residues 103–118 (SLVQHNQWPMGELTCK) are Extracellular-facing. Cys117 and Cys196 form a disulfide bridge. Residues 119–139 (VTHLIFSINLFGSIFFLTCMS) traverse the membrane as a helical segment. The Cytoplasmic segment spans residues 140–162 (VDRYLSITYFTNTPSSRKKMVRR). The chain crosses the membrane as a helical span at residues 163-183 (VVCILVWLLAFCVSLPDTYYL). Residues 184–213 (KTVTSASNNETYCRSFYPEHSIKEWLIGME) lie on the Extracellular side of the membrane. Residues 214–234 (LVSVVLGFAVPFSIIAVFYFL) form a helical membrane-spanning segment. The Cytoplasmic segment spans residues 235–252 (LARAISASSDQEKHSSRK). Residues 253-273 (IIFSYVVVFLVCWLPYHVAVL) form a helical membrane-spanning segment. At 274–296 (LDIFSILHYIPFTCRLEHALFTA) the chain is on the extracellular side. A helical transmembrane segment spans residues 297 to 319 (LHVTQCLSLVHCCVNPVLYSFIN). Topologically, residues 320–362 (RNYRYELMKAFIFKYSAKTGLTKLIDASRVSETEYSALEQSTK) are cytoplasmic. The tract at residues 324–362 (YELMKAFIFKYSAKTGLTKLIDASRVSETEYSALEQSTK) is C-terminal cytoplasmic tail. Ser347, Ser350, and Ser355 each carry phosphoserine.

It belongs to the G-protein coupled receptor 1 family. Atypical chemokine receptor subfamily. In terms of assembly, homodimer. Can form heterodimers with CXCR4; heterodimerization may regulate CXCR4 signaling activity. Interacts with ARRB1 and ARRB2. Post-translationally, the Ser/Thr residues in the C-terminal cytoplasmic tail may be phosphorylated. Ubiquitinated at the Lys residues in its C-terminal cytoplasmic tail and is essential for correct trafficking from and to the cell membrane. Deubiquitinated by CXCL12-stimulation in a reversible manner. As to expression, expressed in monocytes, basophils, B-cells, umbilical vein endothelial cells (HUVEC) and B-lymphoblastoid cells. Lower expression detected in CD4+ T-lymphocytes and natural killer cells. In the brain, detected in endothelial cells and capillaries, and in mature neurons of the frontal cortex and hippocampus. Expressed in tubular formation in the kidney. Highly expressed in astroglial tumor endothelial, microglial and glioma cells. Expressed at low levels in normal CD34+ progenitor cells, but at very high levels in several myeloid malignant cell lines. Expressed in breast carcinomas but not in normal breast tissue (at protein level).

Its subcellular location is the cell membrane. The protein localises to the early endosome. The protein resides in the recycling endosome. Its function is as follows. Atypical chemokine receptor that controls chemokine levels and localization via high-affinity chemokine binding that is uncoupled from classic ligand-driven signal transduction cascades, resulting instead in chemokine sequestration, degradation, or transcytosis. Also known as interceptor (internalizing receptor) or chemokine-scavenging receptor or chemokine decoy receptor. Acts as a receptor for chemokines CXCL11 and CXCL12/SDF1. Chemokine binding does not activate G-protein-mediated signal transduction but instead induces beta-arrestin recruitment, leading to ligand internalization and activation of MAPK signaling pathway. Required for regulation of CXCR4 protein levels in migrating interneurons, thereby adapting their chemokine responsiveness. In glioma cells, transduces signals via MEK/ERK pathway, mediating resistance to apoptosis. Promotes cell growth and survival. Not involved in cell migration, adhesion or proliferation of normal hematopoietic progenitors but activated by CXCL11 in malignant hemapoietic cells, leading to phosphorylation of ERK1/2 (MAPK3/MAPK1) and enhanced cell adhesion and migration. Plays a regulatory role in CXCR4-mediated activation of cell surface integrins by CXCL12. Required for heart valve development. Regulates axon guidance in the oculomotor system through the regulation of CXCL12 levels. Functionally, (Microbial infection) Acts as a coreceptor with CXCR4 for a restricted number of HIV isolates. This is Atypical chemokine receptor 3 from Homo sapiens (Human).